A 642-amino-acid polypeptide reads, in one-letter code: Arginine--tRNA ligase (642 aa).

The 'HIGH' region signature appears at 133 to 143; the sequence is VNPTKPLHMGH.

Belongs to the class-I aminoacyl-tRNA synthetase family.

The protein resides in the cytoplasm. It catalyses the reaction tRNA(Arg) + L-arginine + ATP = L-arginyl-tRNA(Arg) + AMP + diphosphate. The chain is Arginine--tRNA ligase from Thermococcus kodakarensis (strain ATCC BAA-918 / JCM 12380 / KOD1) (Pyrococcus kodakaraensis (strain KOD1)).